An 860-amino-acid chain; its full sequence is Leucine--tRNA ligase (860 aa).

Positions Pro42–His52 match the 'HIGH' region motif. Positions Lys619–Ser623 match the 'KMSKS' region motif. Lys622 is a binding site for ATP.

This sequence belongs to the class-I aminoacyl-tRNA synthetase family.

It is found in the cytoplasm. It carries out the reaction tRNA(Leu) + L-leucine + ATP = L-leucyl-tRNA(Leu) + AMP + diphosphate. This Escherichia coli (strain ATCC 8739 / DSM 1576 / NBRC 3972 / NCIMB 8545 / WDCM 00012 / Crooks) protein is Leucine--tRNA ligase.